The primary structure comprises 211 residues: tRNA (guanine-N(7)-)-methyltransferase (211 aa).

E44, D69, D96, and D118 together coordinate S-adenosyl-L-methionine. D118 is a catalytic residue. K122 provides a ligand contact to substrate. Residues 124–129 (RHEKRR) form an interaction with RNA region. Substrate contacts are provided by residues D154 and 191–194 (TEYE).

This sequence belongs to the class I-like SAM-binding methyltransferase superfamily. TrmB family.

It catalyses the reaction guanosine(46) in tRNA + S-adenosyl-L-methionine = N(7)-methylguanosine(46) in tRNA + S-adenosyl-L-homocysteine. It participates in tRNA modification; N(7)-methylguanine-tRNA biosynthesis. Its function is as follows. Catalyzes the formation of N(7)-methylguanine at position 46 (m7G46) in tRNA. The polypeptide is tRNA (guanine-N(7)-)-methyltransferase (Streptococcus pneumoniae (strain CGSP14)).